A 301-amino-acid polypeptide reads, in one-letter code: Probable 5-dehydro-4-deoxyglucarate dehydratase (301 aa).

This sequence belongs to the DapA family.

It carries out the reaction 5-dehydro-4-deoxy-D-glucarate + H(+) = 2,5-dioxopentanoate + CO2 + H2O. The protein operates within carbohydrate acid metabolism; D-glucarate degradation; 2,5-dioxopentanoate from D-glucarate: step 2/2. This Allorhizobium ampelinum (strain ATCC BAA-846 / DSM 112012 / S4) (Agrobacterium vitis (strain S4)) protein is Probable 5-dehydro-4-deoxyglucarate dehydratase.